The primary structure comprises 205 residues: Small ribosomal subunit protein uS4 (205 aa).

The 59-residue stretch at 91 to 149 folds into the S4 RNA-binding domain; sequence MRLDALVLRAAFARSISQARQLVVHRHILVDGKLVDRPSYSVSPGQTVKVKPKSVPLDP.

This sequence belongs to the universal ribosomal protein uS4 family. Part of the 30S ribosomal subunit. Contacts protein S5. The interaction surface between S4 and S5 is involved in control of translational fidelity.

In terms of biological role, one of the primary rRNA binding proteins, it binds directly to 16S rRNA where it nucleates assembly of the body of the 30S subunit. Its function is as follows. With S5 and S12 plays an important role in translational accuracy. This Tropheryma whipplei (strain TW08/27) (Whipple's bacillus) protein is Small ribosomal subunit protein uS4.